Reading from the N-terminus, the 469-residue chain is Melanopsin (469 aa).

The Extracellular portion of the chain corresponds to 1–71 (MDSPPGPTAP…VDVPDHAHYI (71 aa)). The N-linked (GlcNAc...) asparagine glycan is linked to asparagine 30. A helical membrane pass occupies residues 72–92 (LGTVILLVGLTGMLGNLTVIY). Residues 93–106 (TFCRSRSLRTPANM) lie on the Cytoplasmic side of the membrane. The helical transmembrane segment at 107-127 (LIINLAVSDFLMSFTQAPVFF) threads the bilayer. Residues 128–143 (ASSLYKKWLFGETGCE) are Extracellular-facing. A disulfide bond links cysteine 142 and cysteine 220. Residues 144–164 (FYAFCGAVLGITSMITLTAIA) traverse the membrane as a helical segment. Over 165–187 (LDRYLVITRPLATIGMGSKRRTA) the chain is Cytoplasmic. The chain crosses the membrane as a helical span at residues 188 to 208 (LVLLGIWLYALAWSLPPFFGW). The Extracellular portion of the chain corresponds to 209–237 (SAYVPEGLLTSCSWDYVTFTPQVRAYTML). Residues 238 to 258 (LFCFVFFLPLLVIIFCYISIF) traverse the membrane as a helical segment. Topologically, residues 259 to 295 (RAIRETGRACEGWSESPQRRRQWHRLQSEWKMAKVAL) are cytoplasmic. The chain crosses the membrane as a helical span at residues 296–316 (IVILLFVLSWAPYSTVALVAF). Topologically, residues 317–328 (AGYSHILTPYMS) are extracellular. Residues 329-349 (SVPAVIAKASAIHNPIVYAIT) form a helical membrane-spanning segment. Lysine 336 is subject to N6-(retinylidene)lysine. Residues 350–469 (HPKYRAAIAQ…SLDLGMQDAP (120 aa)) are Cytoplasmic-facing. The tract at residues 409-469 (GSESEVGWTD…SLDLGMQDAP (61 aa)) is disordered.

This sequence belongs to the G-protein coupled receptor 1 family. Opsin subfamily.

The protein localises to the cell membrane. It localises to the cell projection. Its subcellular location is the axon. It is found in the dendrite. The protein resides in the perikaryon. Its function is as follows. Photoreceptor that binds cis-retinaldehydes. Contributes to pupillar reflex, photoentrainment and other non-image forming responses to light. May be involved in the optokinetic visual tracking response. May be involved in the regulation of retinal hyaloid vessel growth and regression. The sequence is that of Melanopsin (OPN4) from Phodopus sungorus (Striped hairy-footed hamster).